A 325-amino-acid polypeptide reads, in one-letter code: Taste receptor type 2 member 7 (325 aa).

Topologically, residues 1-9 (MADKVQTTL) are extracellular. Residues 10-30 (LFLAVGEFSVGILGNAFIGLV) form a helical membrane-spanning segment. Over 31–55 (NCMDWVKKRKIASIDLILTSLAISR) the chain is Cytoplasmic. Residues 56–76 (ICLLCVILLDCFILVLYPDVY) traverse the membrane as a helical segment. Over 77-94 (ATGKEMRIIDFFWTLTNH) the chain is Extracellular. A helical membrane pass occupies residues 95 to 115 (LSIWFATCLSIYYFFRIANFF). Over 116-128 (HPLFLWMKWRIDR) the chain is Cytoplasmic. Residues 129 to 149 (VISWILLGCVVLSVFISLPAT) form a helical membrane-spanning segment. The Extracellular segment spans residues 150 to 187 (ENLNADFRFCVKAKRKTNLTWSCRVNKTQHASTKLFLN). Asparagine 167 and asparagine 175 each carry an N-linked (GlcNAc...) asparagine glycan. Residues 188–208 (LATLLPFCVCLMSFFLLILSL) form a helical membrane-spanning segment. The Cytoplasmic portion of the chain corresponds to 209–235 (RRHIRRMQLSATGCRDPSTEAHVRALK). Residues 236-256 (AVISFLLLFIAYYLSFLVATS) traverse the membrane as a helical segment. Residues 257 to 266 (SYFMPETELA) lie on the Extracellular side of the membrane. Residues 267–287 (VIFGESIALIYPSSHSFILIL) form a helical membrane-spanning segment. Over 288–319 (GNNKLRHASLKVIWKVMSILKGRKFQQHKQIG) the chain is Cytoplasmic.

This sequence belongs to the G-protein coupled receptor T2R family.

It localises to the membrane. In terms of biological role, gustducin-coupled receptor implicated in the perception of bitter compounds in the oral cavity and the gastrointestinal tract. Signals through PLCB2 and the calcium-regulated cation channel TRPM5. This is Taste receptor type 2 member 7 (TAS2R7) from Pan paniscus (Pygmy chimpanzee).